Consider the following 189-residue polypeptide: Interferon alpha-C (189 aa).

The N-terminal stretch at 1 to 23 (MAPAWSFRLALLLLSCNAICSLG) is a signal peptide. 2 disulfides stabilise this stretch: Cys-24–Cys-122 and Cys-52–Cys-162.

Belongs to the alpha/beta interferon family.

The protein resides in the secreted. Produced by macrophages, IFN-alpha have antiviral activities. Interferon stimulates the production of two enzymes: a protein kinase and an oligoadenylate synthetase. The protein is Interferon alpha-C (IFNAC) of Bos taurus (Bovine).